Here is a 160-residue protein sequence, read N- to C-terminus: Cytochrome b6-f complex subunit 4 (160 aa).

3 helical membrane-spanning segments follow: residues 36–56 (LLYIFPVVIFGTFACCIGLAV), 95–115 (LLGVLAMAAVPVGLLTVPFIE), and 131–151 (ILFLVGTLVAVWLGIGATFPI).

This sequence belongs to the cytochrome b family. PetD subfamily. The 4 large subunits of the cytochrome b6-f complex are cytochrome b6, subunit IV (17 kDa polypeptide, petD), cytochrome f and the Rieske protein, while the 4 small subunits are petG, petL, petM and petN. The complex functions as a dimer.

Its subcellular location is the plastid. It is found in the chloroplast thylakoid membrane. Component of the cytochrome b6-f complex, which mediates electron transfer between photosystem II (PSII) and photosystem I (PSI), cyclic electron flow around PSI, and state transitions. The sequence is that of Cytochrome b6-f complex subunit 4 from Chlamydomonas moewusii (Chlamydomonas eugametos).